Consider the following 514-residue polypeptide: Na(+)/H(+) antiporter NhaB (514 aa).

12 helical membrane passes run Leu23–Ala43, Pro63–Ala83, Leu97–Phe117, Leu120–Phe140, Phe144–Ile164, Leu202–Pro222, Phe238–Met258, Ala303–Ile323, Leu357–Ile377, Leu391–Ile411, Ala447–Ile467, and Val475–Phe495.

The protein belongs to the NhaB Na(+)/H(+) (TC 2.A.34) antiporter family.

Its subcellular location is the cell inner membrane. It catalyses the reaction 2 Na(+)(in) + 3 H(+)(out) = 2 Na(+)(out) + 3 H(+)(in). Functionally, na(+)/H(+) antiporter that extrudes sodium in exchange for external protons. The protein is Na(+)/H(+) antiporter NhaB of Salmonella gallinarum (strain 287/91 / NCTC 13346).